A 223-amino-acid chain; its full sequence is Voltage-dependent calcium channel gamma-1 subunit (223 aa).

Topologically, residues 1 to 10 (MSQTKTAKVR) are cytoplasmic. A helical transmembrane segment spans residues 11–29 (VTLFFILVGGVLAMVAVVT). Residues 30-109 (DHWAVLSPHL…TQKEYSISAA (80 aa)) are Extracellular-facing. N-linked (GlcNAc...) asparagine glycosylation is found at Asn-43 and Asn-80. Cys-57 and Cys-81 are disulfide-bonded. The chain crosses the membrane as a helical span at residues 110-130 (AIAIFSLGFIIVGSICAFLSF). At 131–135 (GNKRD) the chain is on the cytoplasmic side. Residues 136-156 (YLLRPASMFYAFAGLCLIVSV) form a helical membrane-spanning segment. Over 157–180 (EVMRQSVKRMIDSEDTVWIEHYYS) the chain is Extracellular. Residues 181–205 (WSFACACAAFILLFLGGLFLLLFSL) form a helical membrane-spanning segment. Residues 206–223 (PRMPQNPWESCMDAEPEH) lie on the Cytoplasmic side of the membrane.

It belongs to the PMP-22/EMP/MP20 family. CACNG subfamily. In terms of assembly, component of a calcium channel complex consisting of a pore-forming alpha subunit (CACNA1S) and the ancillary subunits CACNB1 or CACNB2, CACNG1 and CACNA2D1. The channel complex contains alpha, beta, gamma and delta subunits in a 1:1:1:1 ratio, i.e. it contains either CACNB1 or CACNB2. In terms of processing, N-glycosylated. In terms of tissue distribution, detected in skeletal muscle (at protein level).

Its subcellular location is the cell membrane. It localises to the sarcolemma. Its function is as follows. Regulatory subunit of the voltage-gated calcium channel that gives rise to L-type calcium currents in skeletal muscle. Regulates channel inactivation kinetics. This is Voltage-dependent calcium channel gamma-1 subunit (Cacng1) from Mus musculus (Mouse).